Consider the following 319-residue polypeptide: Small ribosomal subunit protein mS35 (319 aa).

Residues 1-30 constitute a mitochondrion transit peptide; sequence MKVPLGLWKVSRGNLWSTQKRVLTMSRCLN.

It belongs to the mitochondrion-specific ribosomal protein mS35 family. Component of the mitochondrial small ribosomal subunit (mt-SSU). Mature yeast 74S mitochondrial ribosomes consist of a small (37S) and a large (54S) subunit. The 37S small subunit contains a 15S ribosomal RNA (15S mt-rRNA) and 34 different proteins. The 54S large subunit contains a 21S rRNA (21S mt-rRNA) and 46 different proteins.

The protein localises to the mitochondrion. In terms of biological role, component of the mitochondrial ribosome (mitoribosome), a dedicated translation machinery responsible for the synthesis of mitochondrial genome-encoded proteins, including at least some of the essential transmembrane subunits of the mitochondrial respiratory chain. The mitoribosomes are attached to the mitochondrial inner membrane and translation products are cotranslationally integrated into the membrane. The sequence is that of Small ribosomal subunit protein mS35 (RSM24) from Saccharomyces cerevisiae (strain ATCC 204508 / S288c) (Baker's yeast).